The chain runs to 509 residues: Proton-gated ion channel subunit pbo-5 (509 aa).

The first 21 residues, 1 to 21 (MTRLSILQHLLTFLILSKINA), serve as a signal peptide directing secretion. Residues 22-275 (TSTTESYFDS…ISLKRRPLFY (254 aa)) are Extracellular-facing. Cysteines 193 and 207 form a disulfide. Helical transmembrane passes span 276–296 (MVTL…GLFA), 310–330 (LGVT…EKVP), and 336–356 (VPLL…AAMT). Residues 357 to 487 (TGIVMKVHRL…GYVRISERLD (131 aa)) are Cytoplasmic-facing. The chain crosses the membrane as a helical span at residues 488-508 (ILFMFLFLSTVTIPVAVLFYL).

The protein belongs to the ligand-gated ion channel (TC 1.A.9) family. Acetylcholine receptor (TC 1.A.9.1) subfamily. As to quaternary structure, the functional channel is a heterooligomer of pbo-5 and pbo-6. May self-associate to form homooligomers with negligible ion channel activity. As to expression, expressed in the posterior body muscles. Also detected in the RIFL, RIFR and RIS head neurons.

It localises to the membrane. Its function is as follows. Forms a proton-gated ion channel with pbo-6 that is activated by acidification of the posterior coelomic space, leading to posterior body wall muscle contraction (pBoc) during the defecation cycle. Probably by regulating the defecation motor program, required for fatty acid uptake by intestinal cells. Does not bind neurotransmitters such as acetylcholine, gamma-aminobutyric acid, glycine, serotonin, glutamate or choline. The protein is Proton-gated ion channel subunit pbo-5 of Caenorhabditis elegans.